Here is a 463-residue protein sequence, read N- to C-terminus: MKTAVEELSPTRVKLTIEVPFEELDHAFDVTYKSLAKQVRIKGFRPGKAPAKLIDRYVGRGAVLTQAVNHAVPELYSEAVSKEEVPVLGPPEVEITRLEDGKELAFTAEVDVRPKFEVTDYEGIEVTVDDAEVTEEQVNERLEALRQRFATLIGVDRPAEQGDHVSIDLSASVDGKKLEDAQASGVSYEIGAGTLLQGLDEAIIGLSAGESATFTTTLVGGEHKGREADVTVTVHSVKLKELPELDDEFARLASEFDTIEELRASEAERLGELLRAQQLRQARDRVLEKLVDSIDIPLPESVIKQEADRRRELLDRQLSQSGLSKEAYLEAQEKTEEEFEAELTENATRAVKTGFVLDQLASQENLTASNEELTQYVVEQAQSMGISPDQLFQSLMQANQLQLVYVEVLRAKALDLVVSKAKITDESGNTIEPPTPVHTETITVASGDEETEESAAEQGETEK.

The PPIase FKBP-type domain occupies 162–243 (GDHVSIDLSA…VHSVKLKELP (82 aa)). Positions 427–444 (SGNTIEPPTPVHTETITV) are enriched in polar residues. Residues 427–463 (SGNTIEPPTPVHTETITVASGDEETEESAAEQGETEK) are disordered.

This sequence belongs to the FKBP-type PPIase family. Tig subfamily.

It is found in the cytoplasm. It catalyses the reaction [protein]-peptidylproline (omega=180) = [protein]-peptidylproline (omega=0). Its function is as follows. Involved in protein export. Acts as a chaperone by maintaining the newly synthesized protein in an open conformation. Functions as a peptidyl-prolyl cis-trans isomerase. The polypeptide is Trigger factor (Thermobifida fusca (strain YX)).